The sequence spans 1035 residues: Kinesin-like protein KIN-4A (1035 aa).

The Kinesin motor domain maps to Ser-11–Ile-370. Gly-90–Thr-97 contacts ATP. Coiled coils occupy residues Cys-408–Arg-436, Gln-504–Ser-707, and Lys-881–Ser-911. Residues Arg-704–Thr-724 are disordered.

Belongs to the TRAFAC class myosin-kinesin ATPase superfamily. Kinesin family. KIN-4 subfamily. In terms of assembly, homodimer. Expressed in stems and flowers. Detected in cells undergoing secondary wall deposition including developing interfascicular fibers and xylem cells, but also in dividing cells and expanding/elongating parenchyma cells.

It is found in the cytoplasm. The protein resides in the cytoskeleton. Functionally, kinesin-like motor protein involved in the control of the oriented deposition of cellulose microfibrils. Its motor activity is directed toward the microtubule's plus end. It possesses the potential to drive long-distance transport of cargo along cortical microtubules. Regulates cell wall mechanics during cell elongation, by the regulation of primary and secondary walls deposition. Contributes to cortical microtubule-mediated trafficking of cell wall components. The sequence is that of Kinesin-like protein KIN-4A from Arabidopsis thaliana (Mouse-ear cress).